Consider the following 443-residue polypeptide: MLPCASCLPGSLLLWALLLLLLGSASPQDSEEPDSYTECTDGYEWDPDSQHCRDVNECLTIPEACKGEMKCINHYGGYLCLPRSAAVINDLHGEGPPPPVPPAQHPNPCPPGYEPDDQDSCVDVDECAQALHDCRPSQDCHNLPGSYQCTCPDGYRKIGPECVDIDECRYRYCQHRCVNLPGSFRCQCEPGFQLGPNNRSCVDVNECDMGAPCEQRCFNSYGTFLCRCHQGYELHRDGFSCSDIDECSYSSYLCQYRCINEPGRFSCHCPQGYQLLATRLCQDIDECESGAHQCSEAQTCVNFHGGYRCVDTNRCVEPYIQVSENRCLCPASNPLCREQPSSIVHRYMTITSERSVPADVFQIQATSVYPGAYNAFQIRAGNSQGDFYIRQINNVSAMLVLARPVTGPREYVLDLEMVTMNSLMSYRASSVLRLTVFVGAYTF.

A signal peptide spans 1 to 23 (MLPCASCLPGSLLLWALLLLLLG). Positions 36–81 (YTECTDGYEWDPDSQHCRDVNECLTIPEACKGEMKCINHYGGYLCL) constitute an EGF-like 1; atypical domain. 18 disulfides stabilise this stretch: Cys-58–Cys-121, Cys-65–Cys-80, Cys-71–Cys-109, Cys-127–Cys-140, Cys-134–Cys-149, Cys-151–Cys-162, Cys-168–Cys-177, Cys-173–Cys-186, Cys-188–Cys-201, Cys-207–Cys-217, Cys-213–Cys-226, Cys-228–Cys-241, Cys-247–Cys-258, Cys-254–Cys-267, Cys-269–Cys-281, Cys-287–Cys-300, Cys-294–Cys-309, and Cys-315–Cys-327. One can recognise an EGF-like 2; calcium-binding domain in the interval 123–163 (DVDECAQALHDCRPSQDCHNLPGSYQCTCPDGYRKIGPECV). Positions 164–202 (DIDECRYRYCQHRCVNLPGSFRCQCEPGFQLGPNNRSCV) constitute an EGF-like 3; calcium-binding domain. Residue Asn-198 is glycosylated (N-linked (GlcNAc...) asparagine). The 40-residue stretch at 203-242 (DVNECDMGAPCEQRCFNSYGTFLCRCHQGYELHRDGFSCS) folds into the EGF-like 4; calcium-binding domain. Positions 243-282 (DIDECSYSSYLCQYRCINEPGRFSCHCPQGYQLLATRLCQ) constitute an EGF-like 5; calcium-binding domain. The EGF-like 6; calcium-binding domain occupies 283-328 (DIDECESGAHQCSEAQTCVNFHGGYRCVDTNRCVEPYIQVSENRCL). An N-linked (GlcNAc...) asparagine glycan is attached at Asn-394.

This sequence belongs to the fibulin family. As to quaternary structure, homodimer; disulfide-linked. Multimer; allows heparin binding. Monomer. Interacts with FBN1 (via N-terminal domain); this interaction inhibits EFEMP2 binding to LOX and ELN. Interacts with LOX (via propeptide); this interaction is strong and facilitates formation of ternary complexes with ELN during elastic fiber assembly; this interaction limits interaction of EFEMP2 with FBLN5. Interacts with PITX2. Interacts with ELN with moderate affinity; this interaction regulates ELN self-assembly maturation stage. Interacts with FBLN5 with moderate affinity. Interacts with LOXL1 (via propeptide), LTBP1 and TGFB1 stronger than with LOXL2 and LTBP3. Interacts with PCOLCE. Interacts with collagen type IV trimer (COL4A1-COL4A1-COL4A2), NID2 and moderately with COL15A1-derived endostatin. Interacts with EMILIN1; this interaction promotes the incorporation of EFEMP2 into the extracellular matrix. Interacts with LTBP4; the LTBP4 long form (LTBP4L) has a stronger binding affinity than the LTBP4 short form and the LTBP4 long form promotes fibrillar deposition of EFEMP2. In terms of processing, N-glycosylated; contains mostly complex-type glycans. Not O-glycosylated. Cleaved by ELANE; produces a 50-55 kDa fragment. Cleaved by MMP2 and MMP9; produces several fragments.

The protein localises to the secreted. It localises to the extracellular space. Its subcellular location is the extracellular matrix. It is found in the basement membrane. Its function is as follows. Plays a crucial role in elastic fiber formation in tissue, and in the formation of ultrastructural connections between elastic laminae and smooth muscle cells in the aorta, therefore participates in terminal differentiation and maturation of smooth muscle cell (SMC) and in the mechanical properties and wall integrity maintenance of the aorta. In addition, is involved in the control of collagen fibril assembly in tissue throught proteolytic activation of LOX leading to cross- linking of collagen and elastin. Also promotes ELN coacervation and participates in the deposition of ELN coacervates on to microfibrils but also regulates ELN cross- linking through LOX interaction. Moreover adheres to the cells through heparin binding in a calcium-dependent manner and regulates vascularlar smooth muscle cells proliferation through angiotensin signaling. This chain is EGF-containing fibulin-like extracellular matrix protein 2, found in Homo sapiens (Human).